A 330-amino-acid chain; its full sequence is Src kinase-associated phosphoprotein 2-A (330 aa).

The tract at residues 53 to 77 is disordered; that stretch reads QDFQDKAETDDQEENDGFSLPPDAV. One can recognise a PH domain in the interval 105-208; it reads DYLRAGYLEK…WINVIMNARG (104 aa). Residues 228–261 form a disordered region; the sequence is SHEEDIYEELPEESEKPVTGSETPKATPVPVNNT. The span at 247-261 shows a compositional bias: polar residues; it reads GSETPKATPVPVNNT. An SH3 domain is found at 268–329; sequence DYANFYRGLW…PKAYIIEMYD (62 aa).

This sequence belongs to the SKAP family. Post-translationally, phosphorylated on tyrosines.

The protein localises to the cytoplasm. Functionally, may be involved in B-cell and macrophage adhesion processes. May play a role in src signaling pathway. The chain is Src kinase-associated phosphoprotein 2-A (skap2-a) from Xenopus laevis (African clawed frog).